Reading from the N-terminus, the 224-residue chain is Uridylate kinase (224 aa).

9–10 contacts ATP; sequence GS. Gly43 is a binding site for UMP. ATP-binding residues include Gly44 and Arg48. UMP-binding positions include Asp65 and 113-119; that span reads TEPAHST. Residues Thr139, Tyr145, and Asp148 each coordinate ATP.

This sequence belongs to the UMP kinase family. As to quaternary structure, homohexamer.

Its subcellular location is the cytoplasm. The catalysed reaction is UMP + ATP = UDP + ADP. Its pathway is pyrimidine metabolism; CTP biosynthesis via de novo pathway; UDP from UMP (UMPK route): step 1/1. With respect to regulation, inhibited by UTP. Functionally, catalyzes the reversible phosphorylation of UMP to UDP. The sequence is that of Uridylate kinase from Methanothermobacter thermautotrophicus (strain ATCC 29096 / DSM 1053 / JCM 10044 / NBRC 100330 / Delta H) (Methanobacterium thermoautotrophicum).